Here is a 608-residue protein sequence, read N- to C-terminus: Histone-arginine methyltransferase CARM1 (608 aa).

A2 carries the post-translational modification N-acetylalanine. The interaction with C9orf72 stretch occupies residues 27–138; that stretch reads ATVSVFPGAR…GHTLERSVFS (112 aa). The SAM-dependent MTase PRMT-type domain maps to 146 to 453; that stretch reads AVQYFQFYGY…KRQSYDISIV (308 aa). Q159, R168, G192, and E214 together coordinate S-adenosyl-L-methionine. Position 216 is a phosphoserine (S216). A Glycyl lysine isopeptide (Lys-Gly) (interchain with G-Cter in ubiquitin) cross-link involves residue K227. Residues E243 and S271 each contribute to the S-adenosyl-L-methionine site. Positions 346–379 are required for nuclear translocation; sequence RILMAKSVKYTVNFLEAKEGDLHRIEIPFKFHML. Positions 499–608 are transactivation domain; the sequence is TGSTYNLSSG…IPTNTMHYGS (110 aa). R550 carries the dimethylated arginine modification.

The protein belongs to the class I-like SAM-binding methyltransferase superfamily. Protein arginine N-methyltransferase family. As to quaternary structure, homodimer. Interacts with NR1H4. Interacts with SNRPC. Interacts with the C-terminus of NCOA2/GRIP1, NCO3/ACTR and NCOA1/SRC1. Part of a complex consisting of CARM1, EP300/P300 and NCOA2/GRIP1. Interacts with FLII, TP53, myogenic factor MEF2, EP300/P300, TRIM24, CREBBP and CTNNB1. Interacts with RELA. Identified in a complex containing CARM1, TRIM24 and NCOA2/GRIP1. Interacts with NCOA3/SRC3. Interacts with SKP2. Interacts (via PH domain-like fold) with C9orf72. Interacts with PARP1; promoting PARP1 recruimtent to replication forks. In terms of assembly, (Microbial infection) Interacts with HTLV-1 protein Tax. In terms of processing, auto-methylated on Arg-550. Methylation enhances transcription coactivator activity. Methylation is required for its role in the regulation of pre-mRNA alternative splicing. Phosphorylation at Ser-216 is strongly increased during mitosis, and decreases rapidly to a very low, basal level after entry into the G1 phase of the cell cycle. Phosphorylation at Ser-216 may promote location in the cytosol. Phosphorylation at Ser-216 interferes with S-adenosyl-L-methionine binding and strongly reduces methyltransferase activity. Post-translationally, ubiquitinated by E3 ubiquitin-protein ligase complex containing FBXO9 at Lys-227; leading to proteasomal degradation. In terms of tissue distribution, overexpressed in prostate adenocarcinomas and high-grade prostatic intraepithelial neoplasia.

It localises to the nucleus. Its subcellular location is the cytoplasm. It is found in the chromosome. It catalyses the reaction L-arginyl-[protein] + 2 S-adenosyl-L-methionine = N(omega),N(omega)-dimethyl-L-arginyl-[protein] + 2 S-adenosyl-L-homocysteine + 2 H(+). With respect to regulation, methylation of H3R17 (H3R17me) by CARM1 is stimulated by preacetylation of H3 'Lys-18' (H3K18ac) H3 'Lys-23' (H3K23ac) by EP300 and blocked by citrullination of H3 'Arg-17' (H3R17ci) by PADI4. Methylates (mono- and asymmetric dimethylation) the guanidino nitrogens of arginyl residues in several proteins involved in DNA packaging, transcription regulation, pre-mRNA splicing, and mRNA stability. Recruited to promoters upon gene activation together with histone acetyltransferases from EP300/P300 and p160 families, methylates histone H3 at 'Arg-17' (H3R17me), forming mainly asymmetric dimethylarginine (H3R17me2a), leading to activation of transcription via chromatin remodeling. During nuclear hormone receptor activation and TCF7L2/TCF4 activation, acts synergically with EP300/P300 and either one of the p160 histone acetyltransferases NCOA1/SRC1, NCOA2/GRIP1 and NCOA3/ACTR or CTNNB1/beta-catenin to activate transcription. During myogenic transcriptional activation, acts together with NCOA3/ACTR as a coactivator for MEF2C. During monocyte inflammatory stimulation, acts together with EP300/P300 as a coactivator for NF-kappa-B. Acts as a coactivator for PPARG, promotes adipocyte differentiation and the accumulation of brown fat tissue. Plays a role in the regulation of pre-mRNA alternative splicing by methylation of splicing factors. Also seems to be involved in p53/TP53 transcriptional activation. Methylates EP300/P300, both at 'Arg-2142', which may loosen its interaction with NCOA2/GRIP1, and at 'Arg-580' and 'Arg-604' in the KIX domain, which impairs its interaction with CREB and inhibits CREB-dependent transcriptional activation. Also methylates arginine residues in RNA-binding proteins PABPC1, ELAVL1 and ELAV4, which may affect their mRNA-stabilizing properties and the half-life of their target mRNAs. Acts as a transcriptional coactivator of ACACA/acetyl-CoA carboxylase by enriching H3R17 methylation at its promoter, thereby positively regulating fatty acid synthesis. Independently of its methyltransferase activity, involved in replication fork progression: promotes PARP1 recruitment to replication forks, leading to poly-ADP-ribosylation of chromatin at replication forks and reduced fork speed. The sequence is that of Histone-arginine methyltransferase CARM1 (CARM1) from Homo sapiens (Human).